A 505-amino-acid chain; its full sequence is MSKQDGKLTGLFGAPVSDRENSMTAGPRGPLLMQDIYFLEQMSHFDREVIPERRMHAKGSGAFGTFTVTNDITQYTSAKMFSEVGKQTEMFARFSTVSGERGAADAERDIRGFALKFYTEDGNWDLVGNNTPVFFFRDPKLFVSLNRAVKRDPRTNMRSAQNNWDFWTGLPEALHQVTILMSDRGIPKDLRHMHGFGSHTYSMYNDKGERVWVKYHFRTQQGIENLTDEEAANVIATDRDSSQRDLFNAIENGDYPKWKMYIQVMTEEQARNHKDNPFDLTKVWYHGDYPLIEVGEFELNRNPNNYFQDVEQAAFAPTNIVPGLDYSPDKMLQGRLFPYGDAQRYRLGVNHWQIPVNQPKGVGIENLCPFSRDGQMRILDDNQGGGPHYYPNNQGVYDSQPEFKKPPFPADGDGYEYNQRQDDDNYFEQPGKLFRLQSDEAKERIFTNTANAMDGVTEDVKRRHIRHCYKADPDYGKGVAKALGIDINSIDLEGEQDETYENFKN.

Residues Met1–Ala25 are disordered. Active-site residues include His56 and Asn129. Tyr339 lines the heme pocket.

The protein belongs to the catalase family. Homodimer. Heme is required as a cofactor.

It carries out the reaction 2 H2O2 = O2 + 2 H2O. Its function is as follows. Decomposes hydrogen peroxide into water and oxygen; serves to protect cells from the toxic effects of hydrogen peroxide. The chain is Catalase (katA) from Staphylococcus warneri.